We begin with the raw amino-acid sequence, 37 residues long: uncharacterized protein (37 aa).

The segment at 1-37 is disordered; that stretch reads MGQVEKARQGQFARPHHSDSQRRVRAWSRIQRRARSF. Residues 23-37 are compositionally biased toward basic residues; the sequence is RVRAWSRIQRRARSF.

This is an uncharacterized protein from Bacillus phage phi105 (Bacteriophage phi-105).